A 309-amino-acid polypeptide reads, in one-letter code: UDP-N-acetylenolpyruvoylglucosamine reductase (309 aa).

Residues 34–221 (RVGGPAQVLF…TAAREAAQPI (188 aa)) form the FAD-binding PCMH-type domain. Arg-179 is a catalytic residue. The Proton donor role is filled by Ser-228. Residue Glu-298 is part of the active site.

The protein belongs to the MurB family. FAD serves as cofactor.

It localises to the cytoplasm. The enzyme catalyses UDP-N-acetyl-alpha-D-muramate + NADP(+) = UDP-N-acetyl-3-O-(1-carboxyvinyl)-alpha-D-glucosamine + NADPH + H(+). The protein operates within cell wall biogenesis; peptidoglycan biosynthesis. Cell wall formation. The chain is UDP-N-acetylenolpyruvoylglucosamine reductase from Methylorubrum extorquens (strain CM4 / NCIMB 13688) (Methylobacterium extorquens).